The chain runs to 699 residues: Elongation factor G (699 aa).

The region spanning Glu8 to Ile283 is the tr-type G domain. Residues Ala17–Thr24, Asp81–His85, and Asn135–Asp138 contribute to the GTP site.

Belongs to the TRAFAC class translation factor GTPase superfamily. Classic translation factor GTPase family. EF-G/EF-2 subfamily.

The protein localises to the cytoplasm. Functionally, catalyzes the GTP-dependent ribosomal translocation step during translation elongation. During this step, the ribosome changes from the pre-translocational (PRE) to the post-translocational (POST) state as the newly formed A-site-bound peptidyl-tRNA and P-site-bound deacylated tRNA move to the P and E sites, respectively. Catalyzes the coordinated movement of the two tRNA molecules, the mRNA and conformational changes in the ribosome. This Rickettsia sibirica (strain ATCC VR-151 / 246) protein is Elongation factor G.